Consider the following 79-residue polypeptide: Acyl carrier protein (79 aa).

The 77-residue stretch at 1-77 (MNNVEKKIKK…KSIDYINNKN (77 aa)) folds into the Carrier domain. Position 37 is an O-(pantetheine 4'-phosphoryl)serine (Ser-37).

It belongs to the acyl carrier protein (ACP) family. In terms of processing, 4'-phosphopantetheine is transferred from CoA to a specific serine of apo-ACP by AcpS. This modification is essential for activity because fatty acids are bound in thioester linkage to the sulfhydryl of the prosthetic group.

The protein resides in the cytoplasm. It functions in the pathway lipid metabolism; fatty acid biosynthesis. Carrier of the growing fatty acid chain in fatty acid biosynthesis. The protein is Acyl carrier protein of Buchnera aphidicola subsp. Schizaphis graminum (strain Sg).